The primary structure comprises 365 residues: Histidinol-phosphate aminotransferase (365 aa).

At Lys-223 the chain carries N6-(pyridoxal phosphate)lysine.

This sequence belongs to the class-II pyridoxal-phosphate-dependent aminotransferase family. Histidinol-phosphate aminotransferase subfamily. In terms of assembly, homodimer. It depends on pyridoxal 5'-phosphate as a cofactor.

It carries out the reaction L-histidinol phosphate + 2-oxoglutarate = 3-(imidazol-4-yl)-2-oxopropyl phosphate + L-glutamate. It participates in amino-acid biosynthesis; L-histidine biosynthesis; L-histidine from 5-phospho-alpha-D-ribose 1-diphosphate: step 7/9. This is Histidinol-phosphate aminotransferase from Brucella abortus (strain 2308).